A 297-amino-acid chain; its full sequence is HTH-type transcriptional regulator PerR (297 aa).

Residues 7–64 (APLNLLRAFEAAGRTGAFALAASELELSPSAISHAIRKLENLLDVRLFQRSTREITLT) form the HTH lysR-type domain. Positions 24 to 44 (FALAASELELSPSAISHAIRK) form a DNA-binding region, H-T-H motif.

Belongs to the LysR transcriptional regulatory family.

In terms of biological role, apparent regulatory gene involved in peroxide resistance in stationary phase. This is HTH-type transcriptional regulator PerR (perR) from Escherichia coli (strain K12).